Reading from the N-terminus, the 128-residue chain is Sulfurtransferase TusD (128 aa).

The active-site Cysteine persulfide intermediate is the Cys78.

It belongs to the DsrE/TusD family. Heterohexamer, formed by a dimer of trimers. The hexameric TusBCD complex contains 2 copies each of TusB, TusC and TusD. The TusBCD complex interacts with TusE.

Its subcellular location is the cytoplasm. Functionally, part of a sulfur-relay system required for 2-thiolation of 5-methylaminomethyl-2-thiouridine (mnm(5)s(2)U) at tRNA wobble positions. Accepts sulfur from TusA and transfers it in turn to TusE. In Buchnera aphidicola subsp. Schizaphis graminum (strain Sg), this protein is Sulfurtransferase TusD.